A 371-amino-acid chain; its full sequence is Putative glutamate--cysteine ligase 2 (371 aa).

Belongs to the glutamate--cysteine ligase type 2 family. YbdK subfamily.

It catalyses the reaction L-cysteine + L-glutamate + ATP = gamma-L-glutamyl-L-cysteine + ADP + phosphate + H(+). In terms of biological role, ATP-dependent carboxylate-amine ligase which exhibits weak glutamate--cysteine ligase activity. In Paraburkholderia phytofirmans (strain DSM 17436 / LMG 22146 / PsJN) (Burkholderia phytofirmans), this protein is Putative glutamate--cysteine ligase 2.